A 96-amino-acid chain; its full sequence is Protein Vpr (96 aa).

The interval 1–42 (MEQAPGDQGPQREPYNEWALEILEELKNEAVRHFPRPWLHGL) is homooligomerization. A phosphoserine; by host mark is found at Ser79, Ser94, and Ser96.

The protein belongs to the HIV-1 VPR protein family. As to quaternary structure, homooligomer, may form homodimer. Interacts with p6-gag region of the Pr55 Gag precursor protein through a (Leu-X-X)4 motif near the C-terminus of the P6gag protein. Interacts with host UNG. May interact with host RAD23A/HHR23A. Interacts with host VPRBP/DCAF1, leading to hijack the CUL4A-RBX1-DDB1-DCAF1/VPRBP complex, mediating ubiquitination of host proteins such as TERT and ZGPAT and arrest of the cell cycle in G2 phase. Post-translationally, phosphorylated on several residues by host. These phosphorylations regulate VPR activity for the nuclear import of the HIV-1 pre-integration complex.

Its subcellular location is the virion. It is found in the host nucleus. The protein localises to the host extracellular space. Its function is as follows. During virus replication, may deplete host UNG protein, and incude G2-M cell cycle arrest. Acts by targeting specific host proteins for degradation by the 26S proteasome, through association with the cellular CUL4A-DDB1 E3 ligase complex by direct interaction with host VPRPB/DCAF-1. Cell cycle arrest reportedly occurs within hours of infection and is not blocked by antiviral agents, suggesting that it is initiated by the VPR carried into the virion. Additionally, VPR induces apoptosis in a cell cycle dependent manner suggesting that these two effects are mechanistically linked. Detected in the serum and cerebrospinal fluid of AIDS patient, VPR may also induce cell death to bystander cells. During virus entry, plays a role in the transport of the viral pre-integration (PIC) complex to the host nucleus. This function is crucial for viral infection of non-dividing macrophages. May act directly at the nuclear pore complex, by binding nucleoporins phenylalanine-glycine (FG)-repeat regions. This chain is Protein Vpr, found in Human immunodeficiency virus type 1 group M subtype F1 (isolate VI850) (HIV-1).